Consider the following 118-residue polypeptide: MNKNDSRLRRARQTRLKIAELSVARLAVHRTNLHIYAQVFSEDGTKVLASASTAEAEVRKELNGNGGNTAAATLVGKRIAEKAKAAGIEAVAFDRSGFRYHGRVKALADAAREAGLKF.

It belongs to the universal ribosomal protein uL18 family. Part of the 50S ribosomal subunit; part of the 5S rRNA/L5/L18/L25 subcomplex. Contacts the 5S and 23S rRNAs.

Its function is as follows. This is one of the proteins that bind and probably mediate the attachment of the 5S RNA into the large ribosomal subunit, where it forms part of the central protuberance. The protein is Large ribosomal subunit protein uL18 of Ralstonia pickettii (strain 12J).